Reading from the N-terminus, the 341-residue chain is Eukaryotic translation initiation factor 2 subunit 1 (341 aa).

An S1 motif domain is found at 16–87 (EDVVMVNVLS…EKGYIDLSKR (72 aa)). Serine 51 is modified (phosphoserine). Residues 293-341 (AENAQVAGDDDEEDGADQEGMQFDPEKEFNHKGSGAGRANEEDEEEEED) are disordered. Residues 300 to 309 (GDDDEEDGAD) are compositionally biased toward acidic residues.

This sequence belongs to the eIF-2-alpha family. As to quaternary structure, eukaryotic translation initiation factor 2 eIF2 is a heterotrimeric complex composed of an alpha, a beta and a gamma subunit. In terms of processing, phosphorylation of eIF-2-alpha impairs the recycling of eIF-2 between successive rounds of initiation and thus leads to inhibition of translation.

The protein resides in the cytoplasm. The protein localises to the cytosol. Functionally, eIF-2 functions in the early steps of protein synthesis by forming a ternary complex with GTP and initiator tRNA. This pre-initiation complex mediates ribosomal recognition of a start codon during the scanning process of the leader region. The protein is Eukaryotic translation initiation factor 2 subunit 1 of Drosophila melanogaster (Fruit fly).